Consider the following 751-residue polypeptide: MEDLSSPDSTLLQGGHNLLSSASFQEAVTFKDVIVDFTQEEWKQLDPGQRDLFRDVTLENYTHLVSIGLQVSKPDVISQLEQGTEPWIMEPSIPVGTCADWETRLENSVSAPEPDISEEELSPEVIVEKHKRDDSWSSNLLESWEYEGSLERQQANQQTLPKEIKVTEKTIPSWEKGPVNNEFGKSVNVSSNLVTQEPSPEETSTKRSIKQNSNPVKKEKSCKCNECGKAFSYCSALIRHQRTHTGEKPYKCNECEKAFSRSENLINHQRIHTGDKPYKCDQCGKGFIEGPSLTQHQRIHTGEKPYKCDECGKAFSQRTHLVQHQRIHTGEKPYTCNECGKAFSQRGHFMEHQKIHTGEKPFKCDECDKTFTRSTHLTQHQKIHTGEKTYKCNECGKAFNGPSTFIRHHMIHTGEKPYECNECGKAFSQHSNLTQHQKTHTGEKPYDCAECGKSFSYWSSLAQHLKIHTGEKPYKCNECGKAFSYCSSLTQHRRIHTREKPFECSECGKAFSYLSNLNQHQKTHTQEKAYECKECGKAFIRSSSLAKHERIHTGEKPYQCHECGKTFSYGSSLIQHRKIHTGERPYKCNECGRAFNQNIHLTQHKRIHTGAKPYECAECGKAFRHCSSLAQHQKTHTEEKPYQCNKCEKTFSQSSHLTQHQRIHTGEKPYKCNECDKAFSRSTHLTEHQNTHTGEKPYNCNECRKTFSQSTYLIQHQRIHSGEKPFGCNDCGKSFRYRSALNKHQRLHPGI.

In terms of domain architecture, KRAB spans 28–99; the sequence is VTFKDVIVDF…EPSIPVGTCA (72 aa). Residues S117, S122, and S199 each carry the phosphoserine modification. Residues 191–202 are compositionally biased toward polar residues; that stretch reads SNLVTQEPSPEE. Residues 191-212 form a disordered region; it reads SNLVTQEPSPEETSTKRSIKQN. K206 is covalently cross-linked (Glycyl lysine isopeptide (Lys-Gly) (interchain with G-Cter in SUMO2)). 19 C2H2-type zinc fingers span residues 222–244, 250–272, 278–300, 306–328, 334–356, 362–384, 390–412, 418–440, 446–468, 474–496, 502–524, 530–552, 558–580, 586–608, 614–636, 642–664, 670–692, 698–720, and 726–748; these read CKCN…QRTH, YKCN…QRIH, YKCD…QRIH, YTCN…QKIH, FKCD…QKIH, YKCN…HMIH, YECN…QKTH, YDCA…LKIH, YKCN…RRIH, FECS…QKTH, YECK…ERIH, YQCH…RKIH, YKCN…KRIH, YECA…QKTH, YQCN…QRIH, YKCN…QNTH, YNCN…QRIH, and FGCN…QRLH.

This sequence belongs to the krueppel C2H2-type zinc-finger protein family. Predominant expression in testis.

It is found in the nucleus. In terms of biological role, may be involved in transcriptional regulation. The protein is Zinc finger protein 184 (ZNF184) of Homo sapiens (Human).